The sequence spans 160 residues: Ribosomal RNA large subunit methyltransferase H (160 aa).

Residues L76 and G108 each coordinate S-adenosyl-L-methionine.

It belongs to the RNA methyltransferase RlmH family. As to quaternary structure, homodimer.

Its subcellular location is the cytoplasm. The enzyme catalyses pseudouridine(1915) in 23S rRNA + S-adenosyl-L-methionine = N(3)-methylpseudouridine(1915) in 23S rRNA + S-adenosyl-L-homocysteine + H(+). Its function is as follows. Specifically methylates the pseudouridine at position 1915 (m3Psi1915) in 23S rRNA. This Nitrobacter hamburgensis (strain DSM 10229 / NCIMB 13809 / X14) protein is Ribosomal RNA large subunit methyltransferase H.